The primary structure comprises 234 residues: NLP effector protein Pc576423 (234 aa).

Positions 1–18 (MNLRAIAVTFATFAGANA) are cleaved as a signal peptide. N35 and N66 each carry an N-linked (GlcNAc...) asparagine glycan. Positions 119–125 (GHRHDWE) match the Hepta-peptide GHRHDWE motif motif.

This sequence belongs to the Necrosis inducing protein (NPP1) family.

The protein localises to the secreted. Functionally, secreted effector that contributes strongly to virulence during infection by P.capsici. This chain is NLP effector protein Pc576423, found in Phytophthora capsici.